Consider the following 481-residue polypeptide: Protein nucleotidyltransferase YdiU (481 aa).

ATP contacts are provided by Gly85, Gly87, Arg88, Lys108, Asp120, Gly121, Arg172, and Arg179. Asp248 functions as the Proton acceptor in the catalytic mechanism. Positions 249 and 258 each coordinate Mg(2+). ATP is bound at residue Asp258.

It belongs to the SELO family. Requires Mg(2+) as cofactor. It depends on Mn(2+) as a cofactor.

It catalyses the reaction L-seryl-[protein] + ATP = 3-O-(5'-adenylyl)-L-seryl-[protein] + diphosphate. The catalysed reaction is L-threonyl-[protein] + ATP = 3-O-(5'-adenylyl)-L-threonyl-[protein] + diphosphate. It carries out the reaction L-tyrosyl-[protein] + ATP = O-(5'-adenylyl)-L-tyrosyl-[protein] + diphosphate. The enzyme catalyses L-histidyl-[protein] + UTP = N(tele)-(5'-uridylyl)-L-histidyl-[protein] + diphosphate. It catalyses the reaction L-seryl-[protein] + UTP = O-(5'-uridylyl)-L-seryl-[protein] + diphosphate. The catalysed reaction is L-tyrosyl-[protein] + UTP = O-(5'-uridylyl)-L-tyrosyl-[protein] + diphosphate. In terms of biological role, nucleotidyltransferase involved in the post-translational modification of proteins. It can catalyze the addition of adenosine monophosphate (AMP) or uridine monophosphate (UMP) to a protein, resulting in modifications known as AMPylation and UMPylation. The chain is Protein nucleotidyltransferase YdiU from Cereibacter sphaeroides (strain KD131 / KCTC 12085) (Rhodobacter sphaeroides).